The following is a 104-amino-acid chain: Thioredoxin (104 aa).

The region spanning 2 to 104 (AIVKVTDADF…NLAEVLDKHL (103 aa)) is the Thioredoxin domain. Cysteines 29 and 32 form a disulfide.

It belongs to the thioredoxin family.

Component of the thioredoxin-thioredoxin reductase system. Participates in various redox reactions through the reversible oxidation of its active center dithiol to a disulfide and catalyzes dithiol-disulfide exchange reactions. This chain is Thioredoxin (trxA), found in Staphylococcus aureus (strain N315).